A 452-amino-acid polypeptide reads, in one-letter code: Phosphoglucosamine mutase (452 aa).

Catalysis depends on S104, which acts as the Phosphoserine intermediate. 4 residues coordinate Mg(2+): S104, D246, D248, and D250. A Phosphoserine modification is found at S104.

This sequence belongs to the phosphohexose mutase family. Mg(2+) is required as a cofactor. Activated by phosphorylation.

The enzyme catalyses alpha-D-glucosamine 1-phosphate = D-glucosamine 6-phosphate. Functionally, catalyzes the conversion of glucosamine-6-phosphate to glucosamine-1-phosphate. The chain is Phosphoglucosamine mutase from Streptomyces griseus subsp. griseus (strain JCM 4626 / CBS 651.72 / NBRC 13350 / KCC S-0626 / ISP 5235).